Here is a 129-residue protein sequence, read N- to C-terminus: MIIKGSNFSVMDNSGARKVQCIQTLEGKKPTSLLRVGDKIVVVIKKMEKRKGGKYKLKVKKSDVCYAVIVKSKQPVRRKSGIIVNAGENGVILLTKTKEPIGTRLTGVVFKEVQRTGLLKNVSISKYII.

The protein belongs to the universal ribosomal protein uL14 family. Component of the mitochondrial ribosome large subunit (39S) which comprises a 16S rRNA and about 50 distinct proteins.

It is found in the mitochondrion. The chain is Large ribosomal subunit protein uL14m (mrpl14) from Dictyostelium discoideum (Social amoeba).